The primary structure comprises 530 residues: Nectin-2 (530 aa).

The N-terminal stretch at 1-31 is a signal peptide; sequence MARAAVLPPSRLSPTLPLLPLLLLLLQETGA. An Ig-like V-type domain is found at 32-147; that stretch reads QDVRVRVLPE…NGTRRGVTWL (116 aa). Residues 32–351 are Extracellular-facing; it reads QDVRVRVLPE…STAGAGATGG (320 aa). Residues Cys54 and Cys131 are joined by a disulfide bond. Residues Asn128 and Asn138 are each glycosylated (N-linked (GlcNAc...) asparagine). Ig-like C2-type domains follow at residues 153-247 and 252-337; these read PENH…VTLS and PEVS…VILV. 2 disulfide bridges follow: Cys174–Cys229 and Cys274–Cys320. A glycan (N-linked (GlcNAc...) asparagine) is linked at Asn315. The chain crosses the membrane as a helical span at residues 352–372; it reads IIGGIIAAIIATAVAGTGILI. Topologically, residues 373–530 are cytoplasmic; sequence CRQQRKEQRL…DFFVSRAMYV (158 aa). A disordered region spans residues 382 to 407; that stretch reads LQAADEEEELEGPPSYKPPTPKAKLE. Residue Thr401 is modified to Phosphothreonine. Phosphoserine is present on Ser424.

The protein belongs to the nectin family. As to quaternary structure, can form trans-heterodimers with NECTIN3. Interacts with CD226 or with PVRIG; these interactions are competitive and have a differential functional outcome on T-cell activation, either positive or negative, respectively. Binds with low affinity to TIGIT. Brain, spinal cord, spleen, kidney, heart and liver.

The protein localises to the cell membrane. Modulator of T-cell signaling. Can be either a costimulator of T-cell function, or a coinhibitor, depending on the receptor it binds to. Upon binding to CD226, stimulates T-cell proliferation and cytokine production, including that of IL2, IL5, IL10, IL13, and IFNG. Upon interaction with PVRIG, inhibits T-cell proliferation. These interactions are competitive. Probable cell adhesion protein. This is Nectin-2 from Mus musculus (Mouse).